The primary structure comprises 211 residues: Urease accessory protein UreG (211 aa).

11 to 18 (GPVGAGKT) is a binding site for GTP.

This sequence belongs to the SIMIBI class G3E GTPase family. UreG subfamily. Homodimer. UreD, UreF and UreG form a complex that acts as a GTP-hydrolysis-dependent molecular chaperone, activating the urease apoprotein by helping to assemble the nickel containing metallocenter of UreC. The UreE protein probably delivers the nickel.

Its subcellular location is the cytoplasm. In terms of biological role, facilitates the functional incorporation of the urease nickel metallocenter. This process requires GTP hydrolysis, probably effectuated by UreG. This chain is Urease accessory protein UreG, found in Actinobacillus pleuropneumoniae serotype 3 (strain JL03).